The primary structure comprises 117 residues: Virion membrane protein A21 (117 aa).

The chain crosses the membrane as a helical; Signal-anchor for type III membrane protein span at residues 1 to 21 (MITLFLILCYFILIFNIIVPA). Topologically, residues 22 to 117 (ISEKMRRERA…RAYSDLFFTT (96 aa)) are virion surface.

Belongs to the chordopoxvirinae A21 family. Envelope protein part of a stable entry-fusion complex (EFC) which is at least composed of proteins A16, A21, A28, G3, G9, H2, J5, and L5. Formation of the viral membrane is necessary for the assembly of the complex. Contains two intramolecular disulfide bonds. They are created by the viral disulfide bond formation pathway, a poxvirus-specific pathway that operates on the cytoplasmic side of the MV membranes.

The protein resides in the virion membrane. Functionally, envelope protein part of the entry-fusion complex responsible for the virus membrane fusion with host cell membrane during virus entry. This chain is Virion membrane protein A21, found in Vaccinia virus (strain Ankara) (VACV).